A 536-amino-acid chain; its full sequence is Hydroxylamine oxidoreductase (536 aa).

The first 26 residues, 1 to 26 (MFEIFKKPLSRIVGATFAFAGVTLLA), serve as a signal peptide directing secretion. The heme c site is built by C116, C119, H120, H136, C160, C163, H164, H168, C179, C182, H183, H198, C223, C226, H227, C234, C237, H238, H241, C254, C257, and H258. Residue H263 coordinates hydroxylamine. H274, C301, C304, H305, H311, C346, C349, H350, H443, and Y451 together coordinate heme c.

In terms of assembly, homotrimer; subunits are linked by two covalent bonds between Tyr-451 of one subunit and heme P460 of an adjacent subunit. Heme c serves as cofactor.

It is found in the anammoxosome. It catalyses the reaction hydroxylamine + 3 Fe(III)-[cytochrome c] = nitric oxide + 3 Fe(II)-[cytochrome c] + 3 H(+). In terms of biological role, catalyzes the oxidation of hydroxylamine to nitric oxide with cytochrome c acting as an electron acceptor. Does not oxidize hydroxylamine to nitrite. Also able to catalyze the four-electron oxidation of hydrazine to N(2) in vitro with reduced efficiency; however, this reaction is probably not physiological. In Kuenenia stuttgartiensis, this protein is Hydroxylamine oxidoreductase.